The primary structure comprises 530 residues: Probable phosphoacetylglucosamine mutase (530 aa).

Serine 62 acts as the Phosphoserine intermediate in catalysis. The Mg(2+) site is built by serine 62, aspartate 278, aspartate 280, and aspartate 282. Substrate contacts are provided by residues 369–371 (EPN), 481–485 (RPSGT), and arginine 490.

The protein belongs to the phosphohexose mutase family. Requires Mg(2+) as cofactor.

It catalyses the reaction N-acetyl-alpha-D-glucosamine 1-phosphate = N-acetyl-D-glucosamine 6-phosphate. Its pathway is nucleotide-sugar biosynthesis; UDP-N-acetyl-alpha-D-glucosamine biosynthesis; N-acetyl-alpha-D-glucosamine 1-phosphate from alpha-D-glucosamine 6-phosphate (route I): step 2/2. Functionally, catalyzes the conversion of GlcNAc-6-P into GlcNAc-1-P during the synthesis of uridine diphosphate/UDP-GlcNAc, which is a biosynthetic precursor of chitin and also supplies the amino sugars for N-linked oligosaccharides of glycoproteins. The protein is Probable phosphoacetylglucosamine mutase of Encephalitozoon cuniculi (strain GB-M1) (Microsporidian parasite).